A 136-amino-acid polypeptide reads, in one-letter code: Large ribosomal subunit protein eL27 (136 aa).

The protein belongs to the eukaryotic ribosomal protein eL27 family.

This is Large ribosomal subunit protein eL27 (RPL27) from Candida albicans (Yeast).